Reading from the N-terminus, the 406-residue chain is Glutamyl-tRNA reductase (406 aa).

Substrate contacts are provided by residues 49–52 (TCHR), serine 107, 112–114 (EPQ), and glutamine 118. Cysteine 50 serves as the catalytic Nucleophile. Residue 187-192 (GAGETG) coordinates NADP(+).

It belongs to the glutamyl-tRNA reductase family. In terms of assembly, homodimer.

The catalysed reaction is (S)-4-amino-5-oxopentanoate + tRNA(Glu) + NADP(+) = L-glutamyl-tRNA(Glu) + NADPH + H(+). It participates in porphyrin-containing compound metabolism; protoporphyrin-IX biosynthesis; 5-aminolevulinate from L-glutamyl-tRNA(Glu): step 1/2. Its function is as follows. Catalyzes the NADPH-dependent reduction of glutamyl-tRNA(Glu) to glutamate 1-semialdehyde (GSA). In Thermomicrobium roseum (strain ATCC 27502 / DSM 5159 / P-2), this protein is Glutamyl-tRNA reductase.